A 453-amino-acid polypeptide reads, in one-letter code: Aldehyde dehydrogenase, dimeric NADP-preferring (453 aa).

Ser-2 bears the N-acetylserine mark. Position 178 is an N6-acetyllysine (Lys-178). 188 to 193 contributes to the NAD(+) binding site; sequence GSTAVG. The residue at position 194 (Lys-194) is an N6-acetyllysine. Catalysis depends on residues Glu-210 and Cys-244.

The protein belongs to the aldehyde dehydrogenase family. As to quaternary structure, homodimer. In terms of tissue distribution, constitutively expressed in cornea, stomach, skin, bladder and lungs. Lowest expression levels in lungs and bladder.

Its subcellular location is the cytoplasm. The catalysed reaction is an aldehyde + NAD(+) + H2O = a carboxylate + NADH + 2 H(+). It carries out the reaction octanal + NAD(+) + H2O = octanoate + NADH + 2 H(+). In terms of biological role, ALDHs play a major role in the detoxification of alcohol-derived acetaldehyde. They are involved in the metabolism of corticosteroids, biogenic amines, neurotransmitters, and lipid peroxidation. Oxidizes medium and long chain aldehydes into non-toxic fatty acids. Preferentially oxidizes aromatic aldehyde substrates. Comprises about 50 percent of corneal epithelial soluble proteins. May play a role in preventing corneal damage caused by ultraviolet light. The chain is Aldehyde dehydrogenase, dimeric NADP-preferring (Aldh3a1) from Mus musculus (Mouse).